Reading from the N-terminus, the 53-residue chain is KKGVTQREDDRTFPCNSGRCACQPLDSYSYTCQSPSSSTANCKNNVCVSEADW.

A propeptide spanning residues 1–6 (KKGVTQ) is cleaved from the precursor. Intrachain disulfides connect Cys-15/Cys-32, Cys-20/Cys-42, and Cys-22/Cys-47.

Expressed by the venom duct.

The protein localises to the secreted. Probable neurotoxin with unknown target. Possibly targets ion channels. This is Conotoxin Cal9.2e from Californiconus californicus (California cone).